The chain runs to 1110 residues: Guanylate cyclase 2D (1110 aa).

An N-terminal signal peptide occupies residues 1 to 66 (MAGLQQGCHP…ADSLSLPAWA (66 aa)). Residues 67–475 (RETFTLGVLG…PNTLCIRGVQ (409 aa)) lie on the Extracellular side of the membrane. The cysteines at positions 121 and 149 are disulfide-linked. 2 N-linked (GlcNAc...) asparagine glycosylation sites follow: asparagine 304 and asparagine 374. A helical membrane pass occupies residues 476-500 (PLGSLLTLTITCVLALVGGFLAYFI). Residues 501 to 1110 (RLGLQQLRLL…TGFAKLARVG (610 aa)) are Cytoplasmic-facing. The tract at residues 529-556 (TPSRRRPHVDSGSESRSVVDGGSPQSVI) is disordered. The Protein kinase domain maps to 541 to 818 (SESRSVVDGG…PSLDQIYTQF (278 aa)). The segment at 880–921 (MGTTVEPEYFDQVTIYFSDIVGFTTISALSEPIEVVGFLNDL) is interaction with NCALD. The region spanning 893 to 1023 (TIYFSDIVGF…DTVNTASRME (131 aa)) is the Guanylate cyclase domain.

Belongs to the adenylyl cyclase class-4/guanylyl cyclase family. In terms of assembly, interacts (via the catalytic domain) with NCALD. Specifically expressed in a subpopulation of olfactory sensory neurons. Expressed in the cilia of the olfactory epithelium.

It is found in the cell projection. The protein localises to the cilium membrane. It carries out the reaction GTP = 3',5'-cyclic GMP + diphosphate. With respect to regulation, activated by Ca(2+). Activated by NCALD in a Ca(2+)-dependent fashion. In terms of biological role, functions as an olfactory receptor activated by a urine odorant, uroguanylin. Activated as well by the volatile semiochemicals carbon disulfide (CS2) and carbon dioxide (CO2). Has guanylate cyclase activity upon binding of the ligand. Activation of GUCY2D neurons leads to the cGMP-dependent activation of the CNGA3 channels, membrane depolarization and an increase in action potential frequency. Signaling pathways activated by GUCY2D may trigger social behaviors such as acquisition of food preference. The chain is Guanylate cyclase 2D (Gucy2d) from Rattus norvegicus (Rat).